A 95-amino-acid chain; its full sequence is Progonadoliberin-1 (95 aa).

The first 22 residues, 1–22 (MAPQTFALWLLLVGTLLGQGCC), serve as a signal peptide directing secretion. The residue at position 23 (Gln23) is a Pyrrolidone carboxylic acid. Gly32 carries the glycine amide modification.

It belongs to the GnRH family.

The protein resides in the secreted. Stimulates the secretion of gonadotropins. The chain is Progonadoliberin-1 (gnrh1) from Morone saxatilis (Striped bass).